The following is a 330-amino-acid chain: Methionyl-tRNA formyltransferase (330 aa).

Residue 121–124 participates in (6S)-5,6,7,8-tetrahydrofolate binding; it reads SLLP.

This sequence belongs to the Fmt family.

The catalysed reaction is L-methionyl-tRNA(fMet) + (6R)-10-formyltetrahydrofolate = N-formyl-L-methionyl-tRNA(fMet) + (6S)-5,6,7,8-tetrahydrofolate + H(+). Attaches a formyl group to the free amino group of methionyl-tRNA(fMet). The formyl group appears to play a dual role in the initiator identity of N-formylmethionyl-tRNA by promoting its recognition by IF2 and preventing the misappropriation of this tRNA by the elongation apparatus. The sequence is that of Methionyl-tRNA formyltransferase from Burkholderia cenocepacia (strain HI2424).